The chain runs to 186 residues: Tetratricopeptide repeat protein 36 (186 aa).

TPR repeat units follow at residues 48 to 81 (SKAL…LPDR), 83 to 115 (SAYN…SGGR), and 120 to 153 (RQSF…GSPF).

This sequence belongs to the TTC36 family.

In Mus musculus (Mouse), this protein is Tetratricopeptide repeat protein 36 (Ttc36).